The chain runs to 287 residues: ATP synthase gamma chain (287 aa).

The protein belongs to the ATPase gamma chain family. As to quaternary structure, F-type ATPases have 2 components, CF(1) - the catalytic core - and CF(0) - the membrane proton channel. CF(1) has five subunits: alpha(3), beta(3), gamma(1), delta(1), epsilon(1). CF(0) has three main subunits: a, b and c.

It is found in the cell inner membrane. In terms of biological role, produces ATP from ADP in the presence of a proton gradient across the membrane. The gamma chain is believed to be important in regulating ATPase activity and the flow of protons through the CF(0) complex. The protein is ATP synthase gamma chain of Cronobacter sakazakii (strain ATCC BAA-894) (Enterobacter sakazakii).